A 247-amino-acid chain; its full sequence is TLC domain-containing protein 1 (247 aa).

Residues 1–35 (MPRLLHPALPLLLGATLTFRALRRALCRLPLPVHV) form the signal peptide. The Extracellular segment spans residues 36–46 (RADPLRTWRWH). The 195-residue stretch at 40–234 (LRTWRWHNLL…LLRSDFCPEH (195 aa)) folds into the TLC domain. A helical membrane pass occupies residues 47–67 (NLLVSFAHSIVSGIWALLCVW). The Cytoplasmic portion of the chain corresponds to 68–83 (QTPDMLVEIETAWSLS). The helical transmembrane segment at 84–104 (GYLLVCFSAGYFIHDTVDIVA) threads the bilayer. The Extracellular segment spans residues 105-123 (SGQTRASWEYLVHHVMAMG). The segment at residues 124–144 (AFFSGIFWSSFVGGGVLTLLV) is an intramembrane region (helical). At 145 to 173 (EVSNIFLTIRMMMKISNAQDHLLYRVNKY) the chain is on the extracellular side. Residues 174–194 (VNLVMYFLFRLAPQAYLTHFF) form a helical membrane-spanning segment. Topologically, residues 195–201 (LRYVNQR) are cytoplasmic. Residues 202–222 (TLGTFLLGILLMLDVMIIIYF) form a helical membrane-spanning segment. Over 223 to 247 (SRLLRSDFCPEHVPKKQHKDKFLTE) the chain is Extracellular.

The protein localises to the cell membrane. In terms of biological role, regulates the composition and fluidity of the plasma membrane. Inhibits the incorporation of membrane-fluidizing phospholipids containing omega-3 long-chain polyunsaturated fatty acids (LCPUFA) and thereby promotes membrane rigidity. Does not appear to have any effect on LCPUFA synthesis. The polypeptide is TLC domain-containing protein 1 (TLCD1) (Homo sapiens (Human)).